The following is a 179-amino-acid chain: Large ribosomal subunit protein uL5 (179 aa).

It belongs to the universal ribosomal protein uL5 family. Part of the 50S ribosomal subunit; part of the 5S rRNA/L5/L18/L25 subcomplex. Contacts the 5S rRNA and the P site tRNA. Forms a bridge to the 30S subunit in the 70S ribosome.

In terms of biological role, this is one of the proteins that bind and probably mediate the attachment of the 5S RNA into the large ribosomal subunit, where it forms part of the central protuberance. In the 70S ribosome it contacts protein S13 of the 30S subunit (bridge B1b), connecting the 2 subunits; this bridge is implicated in subunit movement. Contacts the P site tRNA; the 5S rRNA and some of its associated proteins might help stabilize positioning of ribosome-bound tRNAs. The polypeptide is Large ribosomal subunit protein uL5 (Edwardsiella ictaluri (strain 93-146)).